Consider the following 414-residue polypeptide: Tryptophan synthase beta chain (414 aa).

K108 carries the post-translational modification N6-(pyridoxal phosphate)lysine.

It belongs to the TrpB family. In terms of assembly, tetramer of two alpha and two beta chains. Pyridoxal 5'-phosphate is required as a cofactor.

It carries out the reaction (1S,2R)-1-C-(indol-3-yl)glycerol 3-phosphate + L-serine = D-glyceraldehyde 3-phosphate + L-tryptophan + H2O. The protein operates within amino-acid biosynthesis; L-tryptophan biosynthesis; L-tryptophan from chorismate: step 5/5. Functionally, the beta subunit is responsible for the synthesis of L-tryptophan from indole and L-serine. In Beijerinckia indica subsp. indica (strain ATCC 9039 / DSM 1715 / NCIMB 8712), this protein is Tryptophan synthase beta chain.